The primary structure comprises 154 residues: Fluoride-specific ion channel FluC 1 (154 aa).

4 consecutive transmembrane segments (helical) span residues 28 to 48 (VVAV…AASL), 59 to 79 (WTTF…MVVI), 91 to 111 (PFFG…AVDS), and 124 to 144 (LAYL…AAWA). Na(+) contacts are provided by G99 and T102.

Belongs to the fluoride channel Fluc/FEX (TC 1.A.43) family.

It localises to the cell membrane. The enzyme catalyses fluoride(in) = fluoride(out). With respect to regulation, na(+) is not transported, but it plays an essential structural role and its presence is essential for fluoride channel function. Fluoride-specific ion channel. Important for reducing fluoride concentration in the cell, thus reducing its toxicity. This Streptomyces coelicolor (strain ATCC BAA-471 / A3(2) / M145) protein is Fluoride-specific ion channel FluC 1.